Reading from the N-terminus, the 138-residue chain is Large ribosomal subunit protein uL16 (138 aa).

This sequence belongs to the universal ribosomal protein uL16 family. Part of the 50S ribosomal subunit.

Its function is as follows. Binds 23S rRNA and is also seen to make contacts with the A and possibly P site tRNAs. The sequence is that of Large ribosomal subunit protein uL16 from Mycoplasma genitalium (strain ATCC 33530 / DSM 19775 / NCTC 10195 / G37) (Mycoplasmoides genitalium).